A 452-amino-acid chain; its full sequence is Tubulin alpha-1 chain (452 aa).

Residue glutamine 11 coordinates GTP. N6-acetyllysine is present on lysine 40. Glutamate 71, glycine 144, threonine 145, threonine 179, asparagine 206, and asparagine 228 together coordinate GTP. Glutamate 71 contributes to the Mg(2+) binding site. Glutamate 254 is an active-site residue. The interval 430 to 452 (KDYEEVGAESGDGDDDGLGEEEY) is disordered. Positions 431 to 452 (DYEEVGAESGDGDDDGLGEEEY) are enriched in acidic residues.

It belongs to the tubulin family. Dimer of alpha and beta chains. A typical microtubule is a hollow water-filled tube with an outer diameter of 25 nm and an inner diameter of 15 nM. Alpha-beta heterodimers associate head-to-tail to form protofilaments running lengthwise along the microtubule wall with the beta-tubulin subunit facing the microtubule plus end conferring a structural polarity. Microtubules usually have 13 protofilaments but different protofilament numbers can be found in some organisms and specialized cells. It depends on Mg(2+) as a cofactor. Post-translationally, undergoes a tyrosination/detyrosination cycle, the cyclic removal and re-addition of a C-terminal tyrosine residue by the enzymes tubulin tyrosine carboxypeptidase (TTCP) and tubulin tyrosine ligase (TTL), respectively. Acetylation of alpha chains at Lys-40 stabilizes microtubules and affects affinity and processivity of microtubule motors. This modification has a role in multiple cellular functions, ranging from cell motility, cell cycle progression or cell differentiation to intracellular trafficking and signaling.

It localises to the cytoplasm. The protein localises to the cytoskeleton. It catalyses the reaction GTP + H2O = GDP + phosphate + H(+). In terms of biological role, tubulin is the major constituent of microtubules, a cylinder consisting of laterally associated linear protofilaments composed of alpha- and beta-tubulin heterodimers. Microtubules grow by the addition of GTP-tubulin dimers to the microtubule end, where a stabilizing cap forms. Below the cap, tubulin dimers are in GDP-bound state, owing to GTPase activity of alpha-tubulin. This chain is Tubulin alpha-1 chain (TUBA1), found in Pisum sativum (Garden pea).